Reading from the N-terminus, the 104-residue chain is Large ribosomal subunit protein uL23 (104 aa).

The protein belongs to the universal ribosomal protein uL23 family. In terms of assembly, part of the 50S ribosomal subunit. Contacts protein L29, and trigger factor when it is bound to the ribosome.

One of the early assembly proteins it binds 23S rRNA. One of the proteins that surrounds the polypeptide exit tunnel on the outside of the ribosome. Forms the main docking site for trigger factor binding to the ribosome. This chain is Large ribosomal subunit protein uL23, found in Leptospira borgpetersenii serovar Hardjo-bovis (strain JB197).